The chain runs to 118 residues: Holo-[acyl-carrier-protein] synthase (118 aa).

Positions 8 and 50 each coordinate Mg(2+).

Belongs to the P-Pant transferase superfamily. AcpS family. The cofactor is Mg(2+).

It localises to the cytoplasm. It catalyses the reaction apo-[ACP] + CoA = holo-[ACP] + adenosine 3',5'-bisphosphate + H(+). Transfers the 4'-phosphopantetheine moiety from coenzyme A to a Ser of acyl-carrier-protein. The protein is Holo-[acyl-carrier-protein] synthase of Leifsonia xyli subsp. xyli (strain CTCB07).